Consider the following 91-residue polypeptide: Methanol dehydrogenase [cytochrome c] subunit 2 (91 aa).

Positions 1-22 are cleaved as a signal peptide; it reads MKHVLTLLALASVFAVSNQALA. A disulfide bond links Cys28 and Cys34.

The protein belongs to the methanol dehydrogenase subunit 2 family. Heterotetramer composed of 2 alpha and 2 beta subunits.

It is found in the cell inner membrane. The catalysed reaction is 2 Fe(III)-[cytochrome cL] + a primary alcohol = 2 Fe(II)-[cytochrome cL] + an aldehyde + 2 H(+). Functionally, catalyzes the oxidation of primary alcohols including methanol. The protein is Methanol dehydrogenase [cytochrome c] subunit 2 (moxI) of Methylophilus methylotrophus (Bacterium W3A1).